The following is a 780-amino-acid chain: Endonuclease MutS2 (780 aa).

Gly-334–Thr-341 lines the ATP pocket. One can recognise a Smr domain in the interval Ile-706–Ile-780.

This sequence belongs to the DNA mismatch repair MutS family. MutS2 subfamily. In terms of assembly, homodimer. Binds to stalled ribosomes, contacting rRNA.

Endonuclease that is involved in the suppression of homologous recombination and thus may have a key role in the control of bacterial genetic diversity. Its function is as follows. Acts as a ribosome collision sensor, splitting the ribosome into its 2 subunits. Detects stalled/collided 70S ribosomes which it binds and splits by an ATP-hydrolysis driven conformational change. Acts upstream of the ribosome quality control system (RQC), a ribosome-associated complex that mediates the extraction of incompletely synthesized nascent chains from stalled ribosomes and their subsequent degradation. Probably generates substrates for RQC. The sequence is that of Endonuclease MutS2 from Borreliella burgdorferi (strain ATCC 35210 / DSM 4680 / CIP 102532 / B31) (Borrelia burgdorferi).